The chain runs to 348 residues: Dihydroorotase (348 aa).

Residues His17 and His19 each coordinate Zn(2+). Substrate contacts are provided by residues 19 to 21 and Asn45; that span reads HLR. The Zn(2+) site is built by Lys103, His140, and His178. Residue Lys103 is modified to N6-carboxylysine. Substrate is bound at residue His140. Substrate is bound at residue Leu223. Asp251 serves as a coordination point for Zn(2+). The active site involves Asp251. Substrate contacts are provided by His255 and Ala267.

This sequence belongs to the metallo-dependent hydrolases superfamily. DHOase family. Class II DHOase subfamily. In terms of assembly, homodimer. It depends on Zn(2+) as a cofactor.

The catalysed reaction is (S)-dihydroorotate + H2O = N-carbamoyl-L-aspartate + H(+). Its pathway is pyrimidine metabolism; UMP biosynthesis via de novo pathway; (S)-dihydroorotate from bicarbonate: step 3/3. Catalyzes the reversible cyclization of carbamoyl aspartate to dihydroorotate. This Shigella flexneri serotype 5b (strain 8401) protein is Dihydroorotase.